The sequence spans 294 residues: Protease HtpX homolog (294 aa).

A run of 2 helical transmembrane segments spans residues 12–32 (VLFG…ASSF) and 34–54 (SPGV…YSYW). Residue H138 coordinates Zn(2+). E139 is an active-site residue. H142 lines the Zn(2+) pocket. 2 consecutive transmembrane segments (helical) span residues 152–172 (SVAG…VFFG) and 188–208 (LALL…QLAI). Zn(2+) is bound at residue E213.

This sequence belongs to the peptidase M48B family. Zn(2+) is required as a cofactor.

The protein localises to the cell membrane. This Kineococcus radiotolerans (strain ATCC BAA-149 / DSM 14245 / SRS30216) protein is Protease HtpX homolog.